Consider the following 388-residue polypeptide: Succinate--CoA ligase [ADP-forming] subunit beta (388 aa).

One can recognise an ATP-grasp domain in the interval 9–244; it reads KALFAEYGLP…PSQDDAREAH (236 aa). Residues Lys-46, 53 to 55, Glu-99, Thr-102, and Glu-107 contribute to the ATP site; that span reads GRG. Positions 199 and 213 each coordinate Mg(2+). Substrate-binding positions include Asn-264 and 321–323; that span reads GIV.

The protein belongs to the succinate/malate CoA ligase beta subunit family. As to quaternary structure, heterotetramer of two alpha and two beta subunits. It depends on Mg(2+) as a cofactor.

It carries out the reaction succinate + ATP + CoA = succinyl-CoA + ADP + phosphate. The enzyme catalyses GTP + succinate + CoA = succinyl-CoA + GDP + phosphate. It functions in the pathway carbohydrate metabolism; tricarboxylic acid cycle; succinate from succinyl-CoA (ligase route): step 1/1. In terms of biological role, succinyl-CoA synthetase functions in the citric acid cycle (TCA), coupling the hydrolysis of succinyl-CoA to the synthesis of either ATP or GTP and thus represents the only step of substrate-level phosphorylation in the TCA. The beta subunit provides nucleotide specificity of the enzyme and binds the substrate succinate, while the binding sites for coenzyme A and phosphate are found in the alpha subunit. This is Succinate--CoA ligase [ADP-forming] subunit beta from Shewanella pealeana (strain ATCC 700345 / ANG-SQ1).